An 83-amino-acid polypeptide reads, in one-letter code: uncharacterized protein (83 aa).

A run of 3 helical transmembrane segments spans residues 5 to 22 (VLLS…VYSI), 32 to 49 (IIKI…FSPA), and 56 to 78 (IGTI…IFIA).

Its subcellular location is the cell membrane. This is an uncharacterized protein from Rickettsia prowazekii (strain Madrid E).